The primary structure comprises 538 residues: UNC93-like protein (538 aa).

A glycan (N-linked (GlcNAc...) asparagine) is linked at Asn45. 5 helical membrane-spanning segments follow: residues 46–66 (ISII…TANL), 80–100 (SLSA…TLII), 105–125 (VKWT…FQLF), 128–148 (FYTL…MWAS), and 170–190 (AIIV…ELWG). N-linked (GlcNAc...) asparagine glycosylation is present at Asn210. 7 consecutive transmembrane segments (helical) span residues 244–264 (IFEI…IIAF), 305–325 (LLIP…ADFT), 338–358 (IGFV…LFGS), 366–386 (TPII…ELFW), 394–414 (IIFY…QTQI), 435–455 (LWES…CTQM), and 457–477 (LYIL…VEIL).

It belongs to the unc-93 family.

It localises to the membrane. The sequence is that of UNC93-like protein from Drosophila melanogaster (Fruit fly).